The sequence spans 163 residues: Transmembrane protein 278 (163 aa).

A disordered region spans residues 1–37 (MSEQGRETEEEEGGGGASDTAPMLPRGPPDHQASALT). 2 helical membrane-spanning segments follow: residues 51-71 (LLAGLLLHLLLPAAAFLLVLL) and 105-125 (AALIVFGLLSLPPLLVLASAV). Over residues 136-148 (LLPPPAGTPGPRR) the composition is skewed to pro residues. Residues 136-156 (LLPPPAGTPGPRRPPGRPDED) are disordered.

It belongs to the TMEM88 family.

Its subcellular location is the membrane. This is Transmembrane protein 278 from Homo sapiens (Human).